A 403-amino-acid polypeptide reads, in one-letter code: Aurora kinase A (403 aa).

The interval 1-125 (MDRSKENCIS…SKQKNEESKK (125 aa)) is disordered. Polar residues-rich tracts occupy residues 27-83 (VTQQ…QATS) and 91-101 (PLNNTQKSKQP). S41 and S51 each carry phosphoserine. Residues 114–125 (LASKQKNEESKK) show a composition bias toward basic and acidic residues. The Protein kinase domain maps to 133–383 (FEIGRPLGKG…LREVLEHPWI (251 aa)). Residues K143, K162, and 211-213 (EYA) contribute to the ATP site. Catalysis depends on D256, which acts as the Proton acceptor. K258 participates in a covalent cross-link: Glycyl lysine isopeptide (Lys-Gly) (interchain with G-Cter in SUMO2). Residues 260–261 (EN) and D274 contribute to the ATP site. An activation segment region spans residues 280 to 293 (HAPSSRRTTLCGTL). 2 positions are modified to phosphothreonine: T287 and T288. Position 342 is a phosphoserine; by PKA and PAK (S342).

Belongs to the protein kinase superfamily. Ser/Thr protein kinase family. Aurora subfamily. Part of a complex composed of NEDD9, AURKA and CTTN; within the complex NEDD9 acts as a scaffold protein and is required for complex formation. Identified in a complex with AUNIP and NIN. Interacts with FBXL7. Interacts with CPEB1, JTB, TACC1, TPX2, PPP2CA, as well as with the protein phosphatase type 1 (PP1) isoforms PPP1CA, PPP1CB and PPP1CC. Also interacts with its substrates ARHGEF2, BORA, KIF2A, PARD3, and p53/TP53. Interaction with BORA promotes phosphorylation of PLK1. Interacts with CIMAP3. Interacts with GADD45A, competing with its oligomerization. Interacts (via C-terminus) with AUNIP (via C-terminus). Interacts with FRY; this interaction facilitates AURKA-mediated PLK1 phosphorylation. Interacts with SIRT2. Interacts with MYCN; interaction is phospho-independent and triggers AURKA activation; AURKA competes with FBXW7 for binding to unphosphorylated MYCN but not for binding to phosphorylated MYCN. Interacts with HNRNPU. Interacts with AAAS. Interacts with KLHL18 and CUL3. Interacts with FOXP1. Interacts with HDAC6; AURKA-mediated phosphorylation of HDAC6 promotes deacetylation of alpha-tubulin. In terms of processing, activated by phosphorylation at Thr-288; this brings about a change in the conformation of the activation segment. Phosphorylation at Thr-288 varies during the cell cycle and is highest during M phase. Autophosphorylated at Thr-288 upon TPX2 binding. Thr-288 can be phosphorylated by several kinases, including PAK and PKA. Protein phosphatase type 1 (PP1) binds AURKA and inhibits its activity by dephosphorylating Thr-288 during mitosis. Phosphorylation at Ser-342 decreases the kinase activity. PPP2CA controls degradation by dephosphorylating Ser-51 at the end of mitosis. Ubiquitinated by the E3 ubiquitin-protein ligase complex SCF(FBXL7) during mitosis, leading to its degradation by the proteasome. Ubiquitinated by CHFR, leading to its degradation by the proteasome. Ubiquitinated by the anaphase-promoting complex (APC), leading to its degradation by the proteasome. Ubiquitinated by the CUL3-KLHL18 ligase leading to its activation at the centrosome which is required for initiating mitotic entry. Ubiquitination mediated by CUL3-KLHL18 ligase does not lead to its degradation by the proteasome. As to expression, highly expressed in testis and weakly in skeletal muscle, thymus and spleen. Also highly expressed in colon, ovarian, prostate, neuroblastoma, breast and cervical cancer cell lines.

Its subcellular location is the cytoplasm. The protein localises to the cytoskeleton. It is found in the microtubule organizing center. It localises to the centrosome. The protein resides in the spindle pole. Its subcellular location is the centriole. The protein localises to the cell projection. It is found in the neuron projection. It localises to the cilium. The protein resides in the cilium basal body. Its subcellular location is the basolateral cell membrane. It catalyses the reaction L-seryl-[protein] + ATP = O-phospho-L-seryl-[protein] + ADP + H(+). The enzyme catalyses L-threonyl-[protein] + ATP = O-phospho-L-threonyl-[protein] + ADP + H(+). Activation of CDK1, appears to be an upstream event of AURKA activation. Phosphatase inhibitor-2 (PPP1R2) and TPX2 act also as activators. Inactivated by the G2 checkpoint. Inhibited by GADD45A and p53/TP53, and through dephosphorylation by protein phosphatase type 1 (PP1). MLN8054 is also a potent and selective inhibitor. Activated during the early phase of cilia disassembly in the presence of CIMAP3. Inhibited by the small molecule inhibitor VX-680. Functionally, mitotic serine/threonine kinase that contributes to the regulation of cell cycle progression. Associates with the centrosome and the spindle microtubules during mitosis and plays a critical role in various mitotic events including the establishment of mitotic spindle, centrosome duplication, centrosome separation as well as maturation, chromosomal alignment, spindle assembly checkpoint, and cytokinesis. Required for normal spindle positioning during mitosis and for the localization of NUMA1 and DCTN1 to the cell cortex during metaphase. Required for initial activation of CDK1 at centrosomes. Phosphorylates numerous target proteins, including ARHGEF2, BORA, BRCA1, CDC25B, DLGP5, HDAC6, KIF2A, LATS2, NDEL1, PARD3, PPP1R2, PLK1, RASSF1, TACC3, p53/TP53 and TPX2. Phosphorylates MCRS1 which is required for MCRS1-mediated kinetochore fiber assembly and mitotic progression. Regulates KIF2A tubulin depolymerase activity. Important for microtubule formation and/or stabilization. Required for normal axon formation. Plays a role in microtubule remodeling during neurite extension. Also acts as a key regulatory component of the p53/TP53 pathway, and particularly the checkpoint-response pathways critical for oncogenic transformation of cells, by phosphorylating and destabilizing p53/TP53. Phosphorylates its own inhibitors, the protein phosphatase type 1 (PP1) isoforms, to inhibit their activity. Inhibits cilia outgrowth. Required for cilia disassembly via phosphorylation of HDAC6 and subsequent deacetylation of alpha-tubulin. Regulates protein levels of the anti-apoptosis protein BIRC5 by suppressing the expression of the SCF(FBXL7) E3 ubiquitin-protein ligase substrate adapter FBXL7 through the phosphorylation of the transcription factor FOXP1. This is Aurora kinase A from Homo sapiens (Human).